The primary structure comprises 356 residues: Histidinol-phosphate aminotransferase (356 aa).

N6-(pyridoxal phosphate)lysine is present on Lys-214.

This sequence belongs to the class-II pyridoxal-phosphate-dependent aminotransferase family. Histidinol-phosphate aminotransferase subfamily. As to quaternary structure, homodimer. Pyridoxal 5'-phosphate serves as cofactor.

It carries out the reaction L-histidinol phosphate + 2-oxoglutarate = 3-(imidazol-4-yl)-2-oxopropyl phosphate + L-glutamate. It participates in amino-acid biosynthesis; L-histidine biosynthesis; L-histidine from 5-phospho-alpha-D-ribose 1-diphosphate: step 7/9. The chain is Histidinol-phosphate aminotransferase from Escherichia coli O127:H6 (strain E2348/69 / EPEC).